The chain runs to 122 residues: Large ribosomal subunit protein uL14 (122 aa).

Belongs to the universal ribosomal protein uL14 family. Part of the 50S ribosomal subunit. Forms a cluster with proteins L3 and L19. In the 70S ribosome, L14 and L19 interact and together make contacts with the 16S rRNA in bridges B5 and B8.

Functionally, binds to 23S rRNA. Forms part of two intersubunit bridges in the 70S ribosome. In Sulfurimonas denitrificans (strain ATCC 33889 / DSM 1251) (Thiomicrospira denitrificans (strain ATCC 33889 / DSM 1251)), this protein is Large ribosomal subunit protein uL14.